The chain runs to 241 residues: ATP synthase subunit a (241 aa).

7 helical membrane-spanning segments follow: residues 27–47 (NCSL…CWAL), 52–72 (VVPG…ANTL), 87–107 (VMTT…PFGF), 112–132 (HLSV…VIGF), 142–162 (IFLP…IKLF), 175–195 (LAAN…FVLK), and 198–218 (LVLA…EIFV).

Belongs to the ATPase A chain family. F-type ATPases have 2 components, CF(1) - the catalytic core - and CF(0) - the membrane proton channel. CF(1) has five subunits: alpha(3), beta(3), gamma(1), delta(1), epsilon(1). CF(0) has three main subunits: a(1), b(2) and c(9-12). The alpha and beta chains form an alternating ring which encloses part of the gamma chain. CF(1) is attached to CF(0) by a central stalk formed by the gamma and epsilon chains, while a peripheral stalk is formed by the delta and b chains.

The protein localises to the cell inner membrane. Its function is as follows. Key component of the proton channel; it plays a direct role in the translocation of protons across the membrane. The sequence is that of ATP synthase subunit a from Anaplasma marginale (strain St. Maries).